The sequence spans 71 residues: Protein DP71L (71 aa).

Important for host CHOP inhibition stretches follow at residues 16–18 and 57–61; these read VRF and LSTVL.

Belongs to the asfivirus DP71L family. Interacts (via C-terminus) with host PPP1CB.

Its function is as follows. Interacts with the host phosphatase PP1 catalytic subunit (PPP1CB) and recruits it to dephosphorylate EIF2S1/eIF2alpha and therefore restores the host translation that has been shut-down by the host. Also inhibits the EIF2S1/eIF2alpha-ATF4-DDIT3/CHOP pathway. This chain is Protein DP71L, found in African swine fever virus (strain Badajoz 1971 Vero-adapted) (Ba71V).